A 518-amino-acid polypeptide reads, in one-letter code: D-aminopeptidase (518 aa).

Ser-62 serves as the catalytic Nucleophile. Residue Lys-65 is the Proton donor/acceptor of the active site. The disordered stretch occupies residues 373–392 (FGTGPEKMDISGENEAQSSM). An important for specificity region spans residues 477–487 (QRSMDAPSPGE). Substrate is bound at residue Asp-481.

It belongs to the peptidase S12 family. Homodimer.

The enzyme catalyses Release of an N-terminal D-amino acid from a peptide, Xaa-|-Yaa-, in which Xaa is preferably D-Ala, D-Ser or D-Thr. D-amino acid amides and methyl esters also are hydrolyzed, as is glycine amide.. With respect to regulation, inhibited by beta-lactam compounds such as 6-aminopenicillic acid, 7-aminocephalosporanic acid, benzylpenicillin and ampicillin. Inhibited by p-chloromercuribenzoate. Functionally, hydrolyzes N-terminal residues in D-amino acid-containing peptides. The sequence is that of D-aminopeptidase from Brucella melitensis biotype 2 (strain ATCC 23457).